The primary structure comprises 436 residues: Methylenetetrahydrofolate--tRNA-(uracil-5-)-methyltransferase TrmFO (436 aa).

An FAD-binding site is contributed by 8–13 (GGGLAG).

Belongs to the MnmG family. TrmFO subfamily. FAD is required as a cofactor.

The protein resides in the cytoplasm. It carries out the reaction uridine(54) in tRNA + (6R)-5,10-methylene-5,6,7,8-tetrahydrofolate + NADH + H(+) = 5-methyluridine(54) in tRNA + (6S)-5,6,7,8-tetrahydrofolate + NAD(+). The catalysed reaction is uridine(54) in tRNA + (6R)-5,10-methylene-5,6,7,8-tetrahydrofolate + NADPH + H(+) = 5-methyluridine(54) in tRNA + (6S)-5,6,7,8-tetrahydrofolate + NADP(+). Catalyzes the folate-dependent formation of 5-methyl-uridine at position 54 (M-5-U54) in all tRNAs. The chain is Methylenetetrahydrofolate--tRNA-(uracil-5-)-methyltransferase TrmFO from Syntrophomonas wolfei subsp. wolfei (strain DSM 2245B / Goettingen).